A 177-amino-acid chain; its full sequence is Adenine phosphoribosyltransferase (177 aa).

The protein belongs to the purine/pyrimidine phosphoribosyltransferase family. Homodimer.

Its subcellular location is the cytoplasm. The enzyme catalyses AMP + diphosphate = 5-phospho-alpha-D-ribose 1-diphosphate + adenine. It functions in the pathway purine metabolism; AMP biosynthesis via salvage pathway; AMP from adenine: step 1/1. Catalyzes a salvage reaction resulting in the formation of AMP, that is energically less costly than de novo synthesis. The chain is Adenine phosphoribosyltransferase from Chlorobium chlorochromatii (strain CaD3).